A 434-amino-acid polypeptide reads, in one-letter code: Probable G-protein coupled receptor 150 (434 aa).

The Extracellular segment spans residues 1–3 (MED). A helical membrane pass occupies residues 4 to 24 (LFSPSILPPAPNISVPILLGW). At 25-43 (GLNLTLGQGAPASGPPSRR) the chain is on the cytoplasmic side. Residues 44–64 (VRLVFLGVILVVAVAGNTTVL) form a helical membrane-spanning segment. The Extracellular segment spans residues 65-81 (CRLCGGGGPWAGPKRRK). A helical membrane pass occupies residues 82–102 (MDFLLVQLALADLYACGGTAL). Topologically, residues 103–162 (SQLAWELLGEPRAATGDLACRFLQLLQASGRGASAHLVVLIALERRRAVRLPHGRPLPAR) are cytoplasmic. A helical membrane pass occupies residues 163–183 (ALAALGWLLALLLALPPAFVV). Topologically, residues 184–237 (RGDSPSPLPPPPPPTSLQPGAPPAARAWPGERRCHGIFAPLPRWHLQVYAFYEA) are extracellular. Residues 188 to 210 (PSPLPPPPPPTSLQPGAPPAARA) are disordered. Positions 189–205 (SPLPPPPPPTSLQPGAP) are enriched in pro residues. The chain crosses the membrane as a helical span at residues 238–258 (VAGFVAPVTVLGVACGHLLSV). Residues 259–293 (WWRHRPQAPAAAAPWSASPGRAPAPSALPRAKVQS) are Cytoplasmic-facing. A helical transmembrane segment spans residues 294–314 (LKMSLLLALLFVGCELPYFAA). The Extracellular portion of the chain corresponds to 315-334 (RLAAAWSSGPAGDWEGEGLS). Residues 335 to 355 (AALRVVAMANSALNPFVYLFF) traverse the membrane as a helical segment. At 356–434 (QAGDCRLRRQ…PLPCSCESAF (79 aa)) the chain is on the cytoplasmic side. Residues 398–407 (WPHPHYHHAR) are compositionally biased toward basic residues. The interval 398-434 (WPHPHYHHARREPLDEGGLRPPPPRPRPLPCSCESAF) is disordered. The span at 417–426 (RPPPPRPRPL) shows a compositional bias: pro residues.

This sequence belongs to the G-protein coupled receptor 1 family.

It localises to the cell membrane. Functionally, orphan receptor. This Homo sapiens (Human) protein is Probable G-protein coupled receptor 150 (GPR150).